Here is a 445-residue protein sequence, read N- to C-terminus: UDP-N-acetylmuramoylalanine--D-glutamate ligase (445 aa).

Residue Gly-110–Thr-116 participates in ATP binding.

It belongs to the MurCDEF family.

It is found in the cytoplasm. The enzyme catalyses UDP-N-acetyl-alpha-D-muramoyl-L-alanine + D-glutamate + ATP = UDP-N-acetyl-alpha-D-muramoyl-L-alanyl-D-glutamate + ADP + phosphate + H(+). The protein operates within cell wall biogenesis; peptidoglycan biosynthesis. Functionally, cell wall formation. Catalyzes the addition of glutamate to the nucleotide precursor UDP-N-acetylmuramoyl-L-alanine (UMA). The polypeptide is UDP-N-acetylmuramoylalanine--D-glutamate ligase (Christiangramia forsetii (strain DSM 17595 / CGMCC 1.15422 / KT0803) (Gramella forsetii)).